A 304-amino-acid polypeptide reads, in one-letter code: D-tagatose-1-phosphate kinase (304 aa).

The active-site Proton acceptor is the aspartate 250.

This sequence belongs to the carbohydrate kinase PfkB family. The cofactor is Mg(2+).

The catalysed reaction is alpha-D-tagatopyranose 1-phosphate + ATP = D-tagatofuranose 1,6-bisphosphate + ADP + H(+). Its pathway is carbohydrate degradation. Kinase involved in a D-tagatose catabolic pathway. Catalyzes the phosphorylation of D-tagatose-1-phosphate (Tag-1P) to D-tagatose-1,6-bisphosphate. The chain is D-tagatose-1-phosphate kinase from Klebsiella oxytoca.